Here is a 106-residue protein sequence, read N- to C-terminus: UPF0091 protein RP266 (106 aa).

It belongs to the UPF0091 family.

The polypeptide is UPF0091 protein RP266 (Rickettsia prowazekii (strain Madrid E)).